Reading from the N-terminus, the 259-residue chain is Ubiquinol-cytochrome c reductase complex assembly factor 1 (259 aa).

This sequence belongs to the CBP3 family. Interacts with sloth1; the interaction is probably involved in the assembly and stability of the mitochondrial ubiquinol-cytochrome c reductase complex.

It is found in the mitochondrion inner membrane. Its function is as follows. Required for the assembly of the ubiquinol-cytochrome c reductase complex (mitochondrial respiratory chain complex III or cytochrome b-c1 complex). May be involved in cytochrome b translation and/or stability. In Drosophila melanogaster (Fruit fly), this protein is Ubiquinol-cytochrome c reductase complex assembly factor 1.